A 248-amino-acid chain; its full sequence is Ribosomal RNA small subunit methyltransferase G (248 aa).

Residues G85, F90, I137–E138, and R156 each bind S-adenosyl-L-methionine.

This sequence belongs to the methyltransferase superfamily. RNA methyltransferase RsmG family.

It is found in the cytoplasm. In terms of biological role, specifically methylates the N7 position of a guanine in 16S rRNA. This chain is Ribosomal RNA small subunit methyltransferase G, found in Parasynechococcus marenigrum (strain WH8102).